A 208-amino-acid chain; its full sequence is GTP cyclohydrolase 1 (208 aa).

Residues C89, H92, and C163 each contribute to the Zn(2+) site.

Belongs to the GTP cyclohydrolase I family. As to quaternary structure, homomer.

The catalysed reaction is GTP + H2O = 7,8-dihydroneopterin 3'-triphosphate + formate + H(+). Its pathway is cofactor biosynthesis; 7,8-dihydroneopterin triphosphate biosynthesis; 7,8-dihydroneopterin triphosphate from GTP: step 1/1. This is GTP cyclohydrolase 1 from Saccharolobus islandicus (strain Y.N.15.51 / Yellowstone #2) (Sulfolobus islandicus).